The chain runs to 592 residues: V-type ATP synthase alpha chain (592 aa).

An ATP-binding site is contributed by 233-240 (GPFGSGKT).

It belongs to the ATPase alpha/beta chains family.

The catalysed reaction is ATP + H2O + 4 H(+)(in) = ADP + phosphate + 5 H(+)(out). Functionally, produces ATP from ADP in the presence of a proton gradient across the membrane. The V-type alpha chain is a catalytic subunit. The sequence is that of V-type ATP synthase alpha chain from Clostridium botulinum (strain Loch Maree / Type A3).